A 422-amino-acid chain; its full sequence is Bifunctional enzyme IspD/IspF (422 aa).

The segment at 1 to 267 (MAVGLLLLAA…PISALSMPLP (267 aa)) is 2-C-methyl-D-erythritol 4-phosphate cytidylyltransferase. The tract at residues 268–422 (LIGVGIDFHK…AIAVAQIYHR (155 aa)) is 2-C-methyl-D-erythritol 2,4-cyclodiphosphate synthase. The a divalent metal cation site is built by Asp274 and His276. Residues 274 to 276 (DFH) and 301 to 302 (HS) contribute to the 4-CDP-2-C-methyl-D-erythritol 2-phosphate site. Residue His309 coordinates a divalent metal cation. 4-CDP-2-C-methyl-D-erythritol 2-phosphate contacts are provided by residues 323-325 (DIG), Phe404, and Arg407.

In the N-terminal section; belongs to the IspD/TarI cytidylyltransferase family. IspD subfamily. It in the C-terminal section; belongs to the IspF family. It depends on a divalent metal cation as a cofactor.

The catalysed reaction is 2-C-methyl-D-erythritol 4-phosphate + CTP + H(+) = 4-CDP-2-C-methyl-D-erythritol + diphosphate. It catalyses the reaction 4-CDP-2-C-methyl-D-erythritol 2-phosphate = 2-C-methyl-D-erythritol 2,4-cyclic diphosphate + CMP. It participates in isoprenoid biosynthesis; isopentenyl diphosphate biosynthesis via DXP pathway; isopentenyl diphosphate from 1-deoxy-D-xylulose 5-phosphate: step 2/6. The protein operates within isoprenoid biosynthesis; isopentenyl diphosphate biosynthesis via DXP pathway; isopentenyl diphosphate from 1-deoxy-D-xylulose 5-phosphate: step 4/6. Its function is as follows. Bifunctional enzyme that catalyzes the formation of 4-diphosphocytidyl-2-C-methyl-D-erythritol from CTP and 2-C-methyl-D-erythritol 4-phosphate (MEP) (IspD), and catalyzes the conversion of 4-diphosphocytidyl-2-C-methyl-D-erythritol 2-phosphate (CDP-ME2P) to 2-C-methyl-D-erythritol 2,4-cyclodiphosphate (ME-CPP) with a corresponding release of cytidine 5-monophosphate (CMP) (IspF). The polypeptide is Bifunctional enzyme IspD/IspF (Tropheryma whipplei (strain TW08/27) (Whipple's bacillus)).